A 37-amino-acid chain; its full sequence is Delta-amaurobitoxin-Pl1b (37 aa).

Disulfide bonds link Cys-2–Cys-18, Cys-9–Cys-23, Cys-17–Cys-33, and Cys-25–Cys-31. Ser-37 is modified (serine amide).

It belongs to the neurotoxin 07 (Beta/delta-agtx) family. 02 (aga-3) subfamily. As to expression, expressed by the venom gland.

It is found in the secreted. Functionally, insecticidal toxin. Binds to site 4 of insect voltage-gated sodium channel (Nav) and inhibits channel inactivation. In vivo, it lethal to lepidopteran larvae. Has no adverse affects when intracerebroventricularly injected in mice at a dose of 0.2 ug, but causes reversible paralysis of legs when injected intracerebroventricularly in mice at a dose of 2.0 ug. The polypeptide is Delta-amaurobitoxin-Pl1b (Pireneitega luctuosa (Tangled nest spider)).